Consider the following 940-residue polypeptide: Phosphoenolpyruvate carboxylase (940 aa).

Catalysis depends on residues H138 and K603.

It belongs to the PEPCase type 1 family. Mg(2+) is required as a cofactor.

The catalysed reaction is oxaloacetate + phosphate = phosphoenolpyruvate + hydrogencarbonate. Forms oxaloacetate, a four-carbon dicarboxylic acid source for the tricarboxylic acid cycle. This Streptococcus thermophilus (strain CNRZ 1066) protein is Phosphoenolpyruvate carboxylase.